A 2238-amino-acid polypeptide reads, in one-letter code: Golgin subfamily A member 4 (2238 aa).

Residues 1-90 form a disordered region; sequence MFKKLKQKIS…QTFAQKLQLR (90 aa). Phosphoserine is present on serine 10. Residues 12-41 show a composition bias toward low complexity; sequence EQQQLQQALAPAQASSSSSTPTRTRSRTSS. Threonine 39 carries the phosphothreonine modification. A Phosphoserine modification is found at serine 41. Composition is skewed to polar residues over residues 52–62 and 73–85; these read NRENASTQATK and SPSQ…TFAQ. Serine 93 and serine 100 each carry phosphoserine. Disordered stretches follow at residues 132–154, 1695–1744, and 1770–1789; these read AAAF…NSDG, LKER…SQDC, and LEQG…HRAL. The segment at 154-224 is interaction with MACF1; that stretch reads GLSREQLLQR…EELQMDQQAK (71 aa). A coiled-coil region spans residues 156-2161; that stretch reads SREQLLQRLR…RYEKNACAAT (2006 aa). A compositionally biased stretch (basic and acidic residues) spans 1695–1711; the sequence is LKEREKQVHSLEDKLKN. Residues 2178 to 2225 enclose the GRIP domain; the sequence is LFGEPTEFEYLRKVMFEYMMGRETKTMAKVITTVLKFPDDQAQKILER.

Homodimer. Interacts with GTP-bound ARL1 and ARL3. Interacts with MACF1. Directly interacts with TBC1D23. Interacts with FAM91A1; this interaction may be mediated by TBC1D23. Ubiquitous. Highly expressed in oligodendrocyte precursors, particularly at a stage just prior to myelination.

It localises to the cytoplasm. The protein resides in the golgi apparatus membrane. Its subcellular location is the golgi apparatus. It is found in the trans-Golgi network membrane. Its function is as follows. Involved in vesicular trafficking at the Golgi apparatus level. May play a role in delivery of transport vesicles containing GPI-linked proteins from the trans-Golgi network through its interaction with MACF1. Involved in endosome-to-Golgi trafficking. This chain is Golgin subfamily A member 4 (Golga4), found in Mus musculus (Mouse).